Reading from the N-terminus, the 411-residue chain is Multidrug resistance protein MdtG (411 aa).

Transmembrane regions (helical) follow at residues 17-37 (LFVA…VMPF), 59-79 (LVFS…GGLA), 92-112 (ALGM…WQFL), 116-136 (AVLG…ATQV), 147-167 (WLST…GLLA), 174-194 (PVFF…LFAV), 222-242 (VLTL…IAPI), 257-277 (LAFV…ISAP), 291-311 (ILVA…MVQN), 320-340 (FLLG…LIYN), and 379-399 (AVFV…WITL).

This sequence belongs to the major facilitator superfamily. DHA1 family. MdtG (TC 2.A.1.2.20) subfamily.

Its subcellular location is the cell inner membrane. The chain is Multidrug resistance protein MdtG from Erwinia billingiae (strain Eb661).